Reading from the N-terminus, the 338-residue chain is Tryptophan--tRNA ligase (338 aa).

ATP-binding positions include 11-13 and 19-20; these read QPS and GN. The 'HIGH' region motif lies at 12 to 20; that stretch reads PSGELSIGN. Aspartate 135 is an L-tryptophan binding site. ATP-binding positions include 147-149, valine 189, and 198-202; these read GSD and KMSKS. The short motif at 198–202 is the 'KMSKS' region element; sequence KMSKS.

It belongs to the class-I aminoacyl-tRNA synthetase family. As to quaternary structure, homodimer.

Its subcellular location is the cytoplasm. The enzyme catalyses tRNA(Trp) + L-tryptophan + ATP = L-tryptophyl-tRNA(Trp) + AMP + diphosphate + H(+). Its function is as follows. Catalyzes the attachment of tryptophan to tRNA(Trp). The polypeptide is Tryptophan--tRNA ligase (Vibrio vulnificus (strain CMCP6)).